Consider the following 851-residue polypeptide: Transforming growth factor beta receptor type 3 (851 aa).

A signal peptide spans 1–20 (MTSHYVIAIFALMSSCLATA). Residues 21 to 787 (GPEPGALCEL…IFHGLDTLTV (767 aa)) lie on the Extracellular side of the membrane. An intrachain disulfide couples Cys-52 to Cys-197. Asn-141 and Asn-492 each carry an N-linked (GlcNAc...) asparagine glycan. Residues 455–730 (KCDNEKMIVA…PKCVPPDEAC (276 aa)) form the ZP domain. Residues Ser-534 and Ser-545 are each glycosylated (O-linked (Xyl...) (glycosaminoglycan) serine). Residues Asn-571, Asn-590, and Asn-697 are each glycosylated (N-linked (GlcNAc...) asparagine). Intrachain disulfides connect Cys-639/Cys-705, Cys-660/Cys-730, and Cys-710/Cys-723. The interaction with TGF-beta ligand stretch occupies residues 737 to 751 (IIWAMMQNKKTFTKP). A helical transmembrane segment spans residues 788 to 809 (MGIAFAAFVIGALLTGALWYIY). Residues 810–851 (SHTGETAGRQQVPTSPPASENSSAAHSIGSTQSTPCSSSSTA) are Cytoplasmic-facing. The disordered stretch occupies residues 816 to 851 (AGRQQVPTSPPASENSSAAHSIGSTQSTPCSSSSTA). The span at 817-834 (GRQQVPTSPPASENSSAA) shows a compositional bias: polar residues. The segment covering 836-851 (SIGSTQSTPCSSSSTA) has biased composition (low complexity). The residue at position 840 (Thr-840) is a Phosphothreonine.

Forms homodimers and homooligomers. Interacts with DYNLT4. Interacts with integrin ITGA5:ITGB1; this interaction promotes the internalization and trafficking of ITGA5:ITGB1 into endocytic vesicles. Interacts with TGFB1, BMP2, BMP5, BMP7 or GDF5 and inhibin A via the ligand binding domains. Interacts with ALK3/BMPR1A; this interaction results in the cell surface retention of BMPR1A. Interacts with ALK6/BMPR1B; this interaction enhances BMPR1B-mediated stimulation of the BMP signaling pathway. Interacts with the scaffolding protein beta-arrestin2/ARRB2; this interaction mediates internalization of TGFBR3 and thus regulates migration, actin cytoskeleton and activation of CDC42. As to quaternary structure, (Microbial infection) Interacts with human cytomegalovirus trimer complex composed of gH, gL, and gO; these interactions may promote HCMV cell entry in specific cell types. Extensively modified by glycosaminoglycan groups (GAG). Post-translationally, phosphorylated in the cytoplasmic domain by the type II receptor TGFBR2 at THR-840 to mediate recruitment of ARRB2 and subsequent internalization of TGFBR2 and TGFBR3.

Its subcellular location is the cell membrane. It is found in the secreted. It localises to the extracellular space. The protein resides in the extracellular matrix. Functionally, cell surface receptor that regulates diverse cellular processes including cell proliferation, differentiation, migration, and apoptosis. Initiates BMP, inhibin, and TGF-beta signaling pathways by interacting with different ligands including TGFB1, BMP2, BMP5, BMP7 or GDF5. Alternatively, acts as a cell surface coreceptor for BMP ligands, serving to enhance ligand binding by differentially regulating BMPR1A/ALK3 and BMPR1B/ALK6 receptor trafficking. Promotes epithelial cell adhesion, focal adhesion formation and integrin signaling during epithelial cell spreading on fibronectin. By interacting with the scaffolding protein beta-arrestin2/ARRB2, regulates migration or actin cytoskeleton and promotes the activation of CDC42 as well as the inhibition of NF-kappa-B. In gonadotrope cells, acts as an inhibin A coreceptor and regulates follicle-stimulating hormone (FSH) levels and female fertility. Plays a role in the inhibition of directed and random cell migration in epithelial cells by altering the actin cytoskeletal organization. Participates in epithelial-mesenchymal transformation (EMT) upon binding to BMP2 or TGFB2, by activating the PAR6/SMURF1/RHOA pathway. Its function is as follows. (Microbial infection) May act as a receptor for human cytomegalovirus in different cell types by interacting with HCMV trimer composed of GO, GH and GL. This Homo sapiens (Human) protein is Transforming growth factor beta receptor type 3.